A 442-amino-acid polypeptide reads, in one-letter code: uncharacterized protein (442 aa).

A run of 7 helical transmembrane segments spans residues 209–229 (FNIW…AYFY), 247–267 (IFFL…HTFS), 284–304 (VGIS…AFVC), 308–328 (LRFI…YTPW), 342–362 (IFFF…MFYI), 374–394 (PVFK…LHIP), and 402–422 (FDII…GVAF).

The protein localises to the membrane. This is an uncharacterized protein from Schizosaccharomyces pombe (strain 972 / ATCC 24843) (Fission yeast).